A 288-amino-acid polypeptide reads, in one-letter code: Probable endonuclease 4 (288 aa).

Zn(2+)-binding residues include histidine 75, histidine 115, glutamate 153, aspartate 187, histidine 190, histidine 224, aspartate 237, histidine 239, and glutamate 269.

Belongs to the AP endonuclease 2 family. Zn(2+) is required as a cofactor.

It catalyses the reaction Endonucleolytic cleavage to 5'-phosphooligonucleotide end-products.. Endonuclease IV plays a role in DNA repair. It cleaves phosphodiester bonds at apurinic or apyrimidinic (AP) sites, generating a 3'-hydroxyl group and a 5'-terminal sugar phosphate. In Chlamydia trachomatis serovar L2 (strain ATCC VR-902B / DSM 19102 / 434/Bu), this protein is Probable endonuclease 4.